We begin with the raw amino-acid sequence, 256 residues long: Imidazole glycerol phosphate synthase subunit HisF (256 aa).

Catalysis depends on residues aspartate 12 and aspartate 131.

It belongs to the HisA/HisF family. In terms of assembly, heterodimer of HisH and HisF.

The protein localises to the cytoplasm. The catalysed reaction is 5-[(5-phospho-1-deoxy-D-ribulos-1-ylimino)methylamino]-1-(5-phospho-beta-D-ribosyl)imidazole-4-carboxamide + L-glutamine = D-erythro-1-(imidazol-4-yl)glycerol 3-phosphate + 5-amino-1-(5-phospho-beta-D-ribosyl)imidazole-4-carboxamide + L-glutamate + H(+). It participates in amino-acid biosynthesis; L-histidine biosynthesis; L-histidine from 5-phospho-alpha-D-ribose 1-diphosphate: step 5/9. In terms of biological role, IGPS catalyzes the conversion of PRFAR and glutamine to IGP, AICAR and glutamate. The HisF subunit catalyzes the cyclization activity that produces IGP and AICAR from PRFAR using the ammonia provided by the HisH subunit. The polypeptide is Imidazole glycerol phosphate synthase subunit HisF (Azotobacter vinelandii (strain DJ / ATCC BAA-1303)).